We begin with the raw amino-acid sequence, 509 residues long: ATP synthase subunit alpha (509 aa).

Residue 169-176 coordinates ATP; that stretch reads GDRKTGKT.

This sequence belongs to the ATPase alpha/beta chains family. F-type ATPases have 2 components, CF(1) - the catalytic core - and CF(0) - the membrane proton channel. CF(1) has five subunits: alpha(3), beta(3), gamma(1), delta(1), epsilon(1). CF(0) has three main subunits: a(1), b(2) and c(9-12). The alpha and beta chains form an alternating ring which encloses part of the gamma chain. CF(1) is attached to CF(0) by a central stalk formed by the gamma and epsilon chains, while a peripheral stalk is formed by the delta and b chains.

The protein resides in the cell membrane. It carries out the reaction ATP + H2O + 4 H(+)(in) = ADP + phosphate + 5 H(+)(out). Produces ATP from ADP in the presence of a proton gradient across the membrane. The alpha chain is a regulatory subunit. In Limosilactobacillus reuteri (strain DSM 20016) (Lactobacillus reuteri), this protein is ATP synthase subunit alpha.